We begin with the raw amino-acid sequence, 364 residues long: Dual-specificity RNA methyltransferase RlmN (364 aa).

Glu91 acts as the Proton acceptor in catalysis. In terms of domain architecture, Radical SAM core spans Glu97–Asp333. An intrachain disulfide couples Cys104 to Cys338. Cys111, Cys115, and Cys118 together coordinate [4Fe-4S] cluster. S-adenosyl-L-methionine contacts are provided by residues Gly164–Glu165, Ser196, Ser218–His220, and Asn295. The active-site S-methylcysteine intermediate is the Cys338.

This sequence belongs to the radical SAM superfamily. RlmN family. The cofactor is [4Fe-4S] cluster.

The protein resides in the cytoplasm. The enzyme catalyses adenosine(2503) in 23S rRNA + 2 reduced [2Fe-2S]-[ferredoxin] + 2 S-adenosyl-L-methionine = 2-methyladenosine(2503) in 23S rRNA + 5'-deoxyadenosine + L-methionine + 2 oxidized [2Fe-2S]-[ferredoxin] + S-adenosyl-L-homocysteine. It catalyses the reaction adenosine(37) in tRNA + 2 reduced [2Fe-2S]-[ferredoxin] + 2 S-adenosyl-L-methionine = 2-methyladenosine(37) in tRNA + 5'-deoxyadenosine + L-methionine + 2 oxidized [2Fe-2S]-[ferredoxin] + S-adenosyl-L-homocysteine. Functionally, specifically methylates position 2 of adenine 2503 in 23S rRNA and position 2 of adenine 37 in tRNAs. m2A2503 modification seems to play a crucial role in the proofreading step occurring at the peptidyl transferase center and thus would serve to optimize ribosomal fidelity. The sequence is that of Dual-specificity RNA methyltransferase RlmN from Neisseria meningitidis serogroup C (strain 053442).